Here is a 111-residue protein sequence, read N- to C-terminus: Large ribosomal subunit protein uL22 (111 aa).

This sequence belongs to the universal ribosomal protein uL22 family. As to quaternary structure, part of the 50S ribosomal subunit.

Functionally, this protein binds specifically to 23S rRNA; its binding is stimulated by other ribosomal proteins, e.g. L4, L17, and L20. It is important during the early stages of 50S assembly. It makes multiple contacts with different domains of the 23S rRNA in the assembled 50S subunit and ribosome. In terms of biological role, the globular domain of the protein is located near the polypeptide exit tunnel on the outside of the subunit, while an extended beta-hairpin is found that lines the wall of the exit tunnel in the center of the 70S ribosome. The chain is Large ribosomal subunit protein uL22 from Wigglesworthia glossinidia brevipalpis.